The chain runs to 1284 residues: Neurexin-4 (1284 aa).

A signal peptide spans 1-35 (MRPPRSNTKAAFSSLQFGLLCLLLLVNNGIKSVQA). At 36–1217 (DAFTDYFSDY…LRKAYNEVDS (1182 aa)) the chain is on the extracellular side. In terms of domain architecture, F5/8 type C spans 47–185 (CNQPLMERAV…ISMRVELYGC (139 aa)). A disulfide bond links Cys47 and Cys185. Asn195, Asn329, Asn340, and Asn398 each carry an N-linked (GlcNAc...) asparagine glycan. The Laminin G-like 1 domain maps to 220–369 (FKTAFANGVM…FTRVNTIYAC (150 aa)). A disulfide bridge links Cys333 with Cys369. Residues 403–540 (FRTYEETGVM…CGDDVVVDAC (138 aa)) form the Laminin G-like 2 domain. 4 disulfides stabilise this stretch: Cys507/Cys540, Cys546/Cys557, Cys551/Cys566, and Cys568/Cys578. Positions 542–579 (MIDRCNPNPCQHKGLCHQNSREFFCDCGHTGYAGAVCH) constitute an EGF-like 1 domain. The N-linked (GlcNAc...) asparagine glycan is linked to Asn668. The Laminin G-like 3 domain maps to 824 to 962 (FRTTQENSVI…RGLYGISTGC (139 aa)). Cystine bridges form between Cys934–Cys962, Cys966–Cys977, Cys971–Cys986, and Cys988–Cys998. In terms of domain architecture, EGF-like 2 spans 962–999 (CVGRCESNPCLNNGTCIERYDGYSCDCRWSAFKGPICA). Asn974 carries N-linked (GlcNAc...) asparagine glycosylation. A Laminin G-like 4 domain is found at 1032-1183 (FTTTIPKGFL…LGTQLTEDFC (152 aa)). Asn1047 and Asn1137 each carry an N-linked (GlcNAc...) asparagine glycan. A disulfide bridge connects residues Cys1147 and Cys1183. The chain crosses the membrane as a helical span at residues 1218 to 1238 (VLLACLLVILFLLLILMFFLI). The Cytoplasmic portion of the chain corresponds to 1239–1284 (GRYLHRHKGDYLTHEDQGADGADDPDDAVLHSTTGHQVRKRTEIFI).

Belongs to the neurexin family. In terms of assembly, forms a complex with Nrg and Cont. Forms a complex composed of septa junction proteins Nrx-IV/Nrx, Tsf2/MTf, Cont and Nrg during late embryogenesis. The C-terminal region interacts with coracle. Interacts with Patj in cis form. Found in septate junctions of epithelial and glial cells.

It is found in the cell membrane. The protein resides in the cell junction. The protein localises to the septate junction. Functionally, seems to play a role in the formation and function of septate junctions. Septate junctions, which are the equivalent of vertebrates tight junctions, are characterized by regular arrays of transverse structures that span the intermembrane space and form a physical barrier to diffusion. Required for the blood-brain barrier formation. This chain is Neurexin-4 (Nrx-IV), found in Drosophila melanogaster (Fruit fly).